The chain runs to 291 residues: N-acetylmannosamine kinase (291 aa).

ATP is bound by residues 5–12 and 132–139; these read AIDIGGTK and GVGGGVVS. Zn(2+) contacts are provided by His156, Cys166, Cys168, and Cys173.

This sequence belongs to the ROK (NagC/XylR) family. NanK subfamily. In terms of assembly, homodimer.

The enzyme catalyses an N-acyl-D-mannosamine + ATP = an N-acyl-D-mannosamine 6-phosphate + ADP + H(+). The protein operates within amino-sugar metabolism; N-acetylneuraminate degradation; D-fructose 6-phosphate from N-acetylneuraminate: step 2/5. Its function is as follows. Catalyzes the phosphorylation of N-acetylmannosamine (ManNAc) to ManNAc-6-P. This is N-acetylmannosamine kinase from Escherichia coli O157:H7.